Reading from the N-terminus, the 90-residue chain is Small ribosomal subunit protein uS15c (90 aa).

This sequence belongs to the universal ribosomal protein uS15 family. As to quaternary structure, part of the 30S ribosomal subunit.

It localises to the plastid. The protein resides in the chloroplast. This is Small ribosomal subunit protein uS15c (rps15) from Manihot esculenta (Cassava).